The sequence spans 472 residues: Serine/threonine-protein kinase ULK3 (472 aa).

The region spanning 14–270 is the Protein kinase domain; that stretch reads FILTERLGSG…FQDFFAHPWV (257 aa). ATP-binding positions include 20–28 and lysine 44; that span reads LGSGTYATV. The active-site Proton acceptor is aspartate 137. A Phosphoserine modification is found at serine 176. The 67-residue stretch at 281–347 folds into the MIT 1 domain; it reads LAQATALVVE…VSRAEELKAI (67 aa). A phosphoserine; by autocatalysis mark is found at serine 350 and serine 384. Positions 376 to 444 constitute an MIT 2 domain; that stretch reads LLAALEVASA…ARAEYLKEQI (69 aa). Serine 464 carries the phosphoserine modification.

Belongs to the protein kinase superfamily. Ser/Thr protein kinase family. APG1/unc-51/ULK1 subfamily. In terms of assembly, interacts (via protein kinase domain) with SUFU. In terms of processing, autophosphorylated. Autophosphorylation is blocked by interaction with SUFU.

The protein resides in the cytoplasm. It carries out the reaction L-seryl-[protein] + ATP = O-phospho-L-seryl-[protein] + ADP + H(+). The catalysed reaction is L-threonyl-[protein] + ATP = O-phospho-L-threonyl-[protein] + ADP + H(+). Functionally, serine/threonine protein kinase that acts as a regulator of Sonic hedgehog (SHH) signaling and autophagy. Acts as a negative regulator of SHH signaling in the absence of SHH ligand: interacts with SUFU, thereby inactivating the protein kinase activity and preventing phosphorylation of GLI proteins (GLI1, GLI2 and/or GLI3). Positively regulates SHH signaling in the presence of SHH: dissociates from SUFU, autophosphorylates and mediates phosphorylation of GLI2, activating it and promoting its nuclear translocation. Phosphorylates in vitro GLI2, as well as GLI1 and GLI3, although less efficiently. Also acts as a regulator of autophagy: following cellular senescence, able to induce autophagy. This Rattus norvegicus (Rat) protein is Serine/threonine-protein kinase ULK3 (Ulk3).